The sequence spans 391 residues: Probable inactive allantoicase (391 aa).

This sequence belongs to the allantoicase family.

Functionally, the function of this enzyme is unclear as allantoicase activity is not known to exist in mammals. The sequence is that of Probable inactive allantoicase from Homo sapiens (Human).